Here is a 328-residue protein sequence, read N- to C-terminus: DNA polymerase IV (328 aa).

Positions 6 to 187 (IIHIDMDYFF…LDIGDFPGVG (182 aa)) constitute a UmuC domain. Residues aspartate 10 and aspartate 105 each contribute to the Mg(2+) site. Residue glutamate 106 is part of the active site.

The protein belongs to the DNA polymerase type-Y family. As to quaternary structure, monomer. Requires Mg(2+) as cofactor.

It localises to the cytoplasm. The enzyme catalyses DNA(n) + a 2'-deoxyribonucleoside 5'-triphosphate = DNA(n+1) + diphosphate. Its function is as follows. Poorly processive, error-prone DNA polymerase involved in untargeted mutagenesis. Copies undamaged DNA at stalled replication forks, which arise in vivo from mismatched or misaligned primer ends. These misaligned primers can be extended by PolIV. Exhibits no 3'-5' exonuclease (proofreading) activity. May be involved in translesional synthesis, in conjunction with the beta clamp from PolIII. The protein is DNA polymerase IV of Staphylococcus aureus (strain bovine RF122 / ET3-1).